The following is a 131-amino-acid chain: Small ribosomal subunit protein uS8 (131 aa).

Belongs to the universal ribosomal protein uS8 family. In terms of assembly, part of the 30S ribosomal subunit. Contacts proteins S5 and S12.

Its function is as follows. One of the primary rRNA binding proteins, it binds directly to 16S rRNA central domain where it helps coordinate assembly of the platform of the 30S subunit. The polypeptide is Small ribosomal subunit protein uS8 (Rhizorhabdus wittichii (strain DSM 6014 / CCUG 31198 / JCM 15750 / NBRC 105917 / EY 4224 / RW1) (Sphingomonas wittichii)).